Consider the following 3396-residue polypeptide: Versican core protein (3396 aa).

An N-terminal signal peptide occupies residues 1 to 20 (MFINIKSILWMCSTLIVTHA). Residues 21–146 (LHKVKVGKSP…EDTQDTVSLT (126 aa)) form the Ig-like V-type domain. 5 disulfides stabilise this stretch: Cys44-Cys130, Cys172-Cys243, Cys196-Cys217, Cys270-Cys345, and Cys294-Cys315. Residue Asn57 is glycosylated (N-linked (GlcNAc...) asparagine). Link domains lie at 150 to 245 (VVFH…YCYV) and 251 to 347 (DVFH…YCFK). The N-linked (GlcNAc...) asparagine glycan is linked to Asn330. The interval 348-1335 (PKEATTIDLS…IIEVRENKTG (988 aa)) is GAG-alpha (glucosaminoglycan attachment domain). The segment covering 420–430 (ATKLPTPTGST) has biased composition (polar residues). Disordered stretches follow at residues 420 to 439 (ATKL…MDDY) and 603 to 622 (STTV…MDDW). N-linked (GlcNAc...) asparagine glycosylation occurs at Asn615. O-linked (Xyl...) (chondroitin sulfate) serine glycosylation occurs at Ser659. Residues Asn782 and Asn809 are each glycosylated (N-linked (GlcNAc...) asparagine). 3 disordered regions span residues 807-829 (EDNT…LPPA), 1126-1154 (IGPK…TSSL), and 1277-1316 (REYF…PAST). A compositionally biased stretch (polar residues) spans 811 to 824 (TSKPLESTEPSASS). The span at 1143-1154 (EGSSTTGFTSSL) shows a compositional bias: low complexity. N-linked (GlcNAc...) asparagine glycans are attached at residues Asn1332 and Asn1398. Positions 1336–3089 (RMSDLSVIGH…VEGTAIYLPG (1754 aa)) are GAG-beta. Disordered stretches follow at residues 1420-1497 (VPKD…SGGE) and 1510-1539 (FESG…HTEP). A compositionally biased stretch (basic and acidic residues) spans 1422–1433 (KDPEAAEARRGQ). N-linked (GlcNAc...) asparagine glycosylation is found at Asn1442 and Asn1468. The segment covering 1469–1480 (ESTETTESLEVT) has biased composition (low complexity). Residues 1517–1538 (KGAESVTERDTEVGHQAHEHTE) show a composition bias toward basic and acidic residues. O-linked (Xyl...) (chondroitin sulfate) serine glycans are attached at residues Ser1548 and Ser1631. Asn1663 is a glycosylation site (N-linked (GlcNAc...) asparagine). Disordered regions lie at residues 1717 to 1737 (STTV…TAST) and 1759 to 1789 (PNVA…MTDS). A compositionally biased stretch (basic and acidic residues) spans 1720-1729 (VEEKKRKEEE). Polar residues predominate over residues 1760-1781 (NVATSSDSGTRKSFMSLTTPTQ). An N-linked (GlcNAc...) asparagine glycan is attached at Asn1898. O-linked (Xyl...) (chondroitin sulfate) serine glycosylation is found at Ser1935 and Ser1959. Disordered stretches follow at residues 1962-1994 (AAFR…STMV), 2107-2134 (RQEI…NSPA), and 2168-2188 (KEMK…PDAN). The segment covering 1969–1978 (TSPSTVPTSV) has biased composition (low complexity). Acidic residues predominate over residues 2111–2120 (ESETTSEEQI). Ser2116 carries the post-translational modification Phosphoserine; by FAM20C. Asn2179 is a glycosylation site (N-linked (GlcNAc...) asparagine). Ser2247 and Ser2254 each carry an O-linked (Xyl...) (chondroitin sulfate) serine glycan. N-linked (GlcNAc...) asparagine glycans are attached at residues Asn2272, Asn2280, Asn2360, Asn2385, and Asn2392. 4 disordered regions span residues 2371-2396 (TSRP…ETTT), 2445-2473 (SATT…EVPS), 2493-2518 (SEQN…STDG), and 2598-2617 (DTEV…DDST). Polar residues-rich tracts occupy residues 2445–2461 (SATT…TFVS) and 2496–2513 (NKSS…VSYE). The N-linked (GlcNAc...) asparagine glycan is linked to Asn2496. Position 2608 is a phosphoserine (Ser2608). At Thr2617 the chain carries Phosphothreonine. N-linked (GlcNAc...) asparagine glycosylation occurs at Asn2628. O-linked (Xyl...) (chondroitin sulfate) serine glycosylation is found at Ser2722, Ser2723, and Ser2767. Disordered regions lie at residues 2834–2856 (GSEA…DVGS) and 2881–2905 (EEYL…EDDG). The segment covering 2896 to 2905 (TKLEPSEDDG) has biased composition (basic and acidic residues). Residue Asn2934 is glycosylated (N-linked (GlcNAc...) asparagine). Ser2941 is a glycosylation site (O-linked (Xyl...) (chondroitin sulfate) serine). An N-linked (GlcNAc...) asparagine glycan is attached at Asn3067. The region spanning 3089–3125 (GPDRCKMNPCLNGGTCYPTETSYVCTCVPGYSGDQCE) is the EGF-like 1 domain. Disulfide bonds link Cys3093/Cys3104, Cys3098/Cys3113, Cys3115/Cys3124, Cys3131/Cys3142, Cys3136/Cys3151, Cys3153/Cys3162, Cys3169/Cys3180, Cys3197/Cys3289, Cys3265/Cys3281, Cys3296/Cys3339, and Cys3325/Cys3352. The EGF-like 2; calcium-binding domain occupies 3127-3163 (DFDECHSNPCRNGATCVDGFNTFRCLCLPSYVGALCE). In terms of domain architecture, C-type lectin spans 3176-3290 (FQGQCYKYFA…CNYHLTYTCK (115 aa)). One can recognise a Sushi domain in the interval 3294 to 3354 (VACGQPPVVE…WAIPKITCMN (61 aa)). N-linked (GlcNAc...) asparagine glycosylation is found at Asn3369 and Asn3379. Over residues 3371-3380 (SSAKDNSINT) the composition is skewed to polar residues. The segment at 3371–3396 (SSAKDNSINTSKHDHRWSRRWQESRR) is disordered.

The protein belongs to the aggrecan/versican proteoglycan family. As to quaternary structure, interacts with FBLN1. Post-translationally, phosphorylated by FAM20C in the extracellular medium. In terms of processing, proteolytically cleaved by ADAMTS5 and ADAMTS15 in the pericellular matrix surrounding myoblasts, facilitating myoblast contact and fusion which is required for skeletal muscle development and regeneration. Detected in placenta (at protein level). Detected in cerebrospinal fluid, fibroblasts and urine (at protein level). Expressed in the retina (at protein level). Cerebral white matter and plasma. Isoform V0: Expressed in normal brain, gliomas, medulloblastomas, schwannomas, neurofibromas, and meningiomas. Isoform V1: Expressed in normal brain, gliomas, medulloblastomas, schwannomas, neurofibromas, and meningiomas. Isoform V2: Restricted to normal brain and gliomas. Isoform V3: Found in all these tissues except medulloblastomas.

The protein resides in the secreted. It is found in the extracellular space. It localises to the extracellular matrix. Its subcellular location is the cell projection. The protein localises to the cilium. The protein resides in the photoreceptor outer segment. It is found in the interphotoreceptor matrix. In terms of biological role, may play a role in intercellular signaling and in connecting cells with the extracellular matrix. May take part in the regulation of cell motility, growth and differentiation. Binds hyaluronic acid. The polypeptide is Versican core protein (VCAN) (Homo sapiens (Human)).